A 1350-amino-acid polypeptide reads, in one-letter code: ABC transporter G family member 45 (1350 aa).

The interval 1-23 is disordered; the sequence is MAAAVELTGDGGTTAETRWLSPP. One can recognise an ABC transporter 1 domain in the interval 85 to 357; that stretch reads AACAHMCTTR…FETMGFKCPS (273 aa). 118–125 is a binding site for ATP; that stretch reads GAPGSGKT. An ABC transmembrane type-2 1 domain is found at 434–647; it reads NIFKACFSRE…AQNAVALNEF (214 aa). The next 6 helical transmembrane spans lie at 453-473, 491-511, 523-543, 557-577, 597-617, and 683-703; these read VHIF…TLFL, ALFM…AMTI, ILAL…LPIS, VIGY…LFAM, MANM…GFVI, and ICVS…IFAL. One can recognise an ABC transporter 2 domain in the interval 749-1001; sequence LVFDHINYFV…NMIKYFEAIP (253 aa). 794–801 lines the ATP pocket; it reads GITGAGKT. Residues 1074 to 1288 enclose the ABC transmembrane type-2 2 domain; sequence AQCMACLWKQ…TVYGLMFSQL (215 aa). Transmembrane regions (helical) follow at residues 1099-1119, 1126-1146, 1181-1201, 1208-1228, 1238-1258, 1269-1289, and 1322-1342; these read INTF…GSTI, FNIL…NCSI, LPYM…MIGF, FFWF…YGMM, IAAG…GFII, WVYW…SQLG, and LVTS…FLSI.

This sequence belongs to the ABC transporter superfamily. ABCG family. PDR (TC 3.A.1.205) subfamily.

The protein resides in the membrane. Functionally, may be a general defense protein. This chain is ABC transporter G family member 45, found in Oryza sativa subsp. japonica (Rice).